The sequence spans 272 residues: Undecaprenyl-diphosphatase (272 aa).

Helical transmembrane passes span 2–22, 43–63, 82–102, 110–130, 185–205, 224–244, and 252–272; these read FDII…FLPI, FISM…VLLY, WQLW…GLPL, LHTP…FIIL, YVAT…VLII, VLMT…KWLL, and FKPF…VMFI.

It belongs to the UppP family.

It is found in the cell membrane. The catalysed reaction is di-trans,octa-cis-undecaprenyl diphosphate + H2O = di-trans,octa-cis-undecaprenyl phosphate + phosphate + H(+). Its function is as follows. Catalyzes the dephosphorylation of undecaprenyl diphosphate (UPP). Confers resistance to bacitracin. The chain is Undecaprenyl-diphosphatase from Lacticaseibacillus casei (strain BL23) (Lactobacillus casei).